We begin with the raw amino-acid sequence, 154 residues long: MVEKKPAVRSQDPGQRRVLDRAARQRRINRQLEALENDNFQDDPHAGLPQLGKRLPQFDDDADTGKKKKKTRGDHFKLRFRKNFQALLEEQNLSASEGPNYLTACAGPPSRPQRPFCAVCGFPSPYTCVSCGARYCTVRCLGTHQETRCLKWTV.

The disordered stretch occupies residues 1 to 73 (MVEKKPAVRS…TGKKKKKTRG (73 aa)). Positions 14-23 (GQRRVLDRAA) are enriched in basic and acidic residues. Residues 23-39 (ARQRRINRQLEALENDN) adopt a coiled-coil conformation. A Nuclear localization signal motif is present at residues 38–47 (DNFQDDPHAG). The interval 72–110 (RGDHFKLRFRKNFQALLEEQNLSASEGPNYLTACAGPPS) is interaction with NR1D2. A Phosphothreonine; by MAPK11 and MAPK14 modification is found at T103. Residues C117, C120, C128, C131, C136, C140, H144, and C149 each coordinate Zn(2+). Residues 117–149 (CAVCGFPSPYTCVSCGARYCTVRCLGTHQETRC) form an HIT-type zinc finger.

This sequence belongs to the ZNHIT1 family. In terms of assembly, component of the chromatin-remodeling SRCAP complex composed of at least SRCAP, DMAP1, RUVBL1, RUVBL2, ACTL6A, YEATS4, ACTR6 and ZNHIT1. Interacts with MAPK11 and MAPK14. Interacts with NR1D1 and NR2D2. Interacts (via HIT-type zinc finger) with the RUVBL1/RUVBL2 complex in the presence of ADP. Interacts with histone deacetylase HDAC1. Interacts with histone H2AZ1; the interaction results in recruitment of H2AZ1 to the MYOG promoter region. Interacts with PCID2; the interaction results in inhibition of SRCAP complex activity, preventing the deposition of histone variant H2AZ1 to lymphoid fate regulator genes and restricting lymphoid lineage commitment. Phosphorylated on Thr by MAPK11 or MAPK14. Phosphorylation is required for MYOG induction, for deposition of histone H2AZ1 at the MYOG promoter and for SRCAP complex integrity. In terms of tissue distribution, higher expression in testis than in other tissues (at protein level). Expressed in the lens (at protein level). In the intestinal epithelium, expression is enriched at the bottom of crypts. In hematopoietic cells, enriched in hematopoietic stem cells and progenitors with significantly reduced expression in differentiated cells such as granulocytes, monocytes, T cells and B cells.

It is found in the nucleus. Plays a role in chromatin remodeling by promoting the incorporation of histone variant H2AZ1/H2A.Z into the genome to regulate gene expression. Promotes SRCAP complex-mediated deposition of histone variant H2AZ1 to lymphoid fate regulator genes, enhancing lymphoid lineage commitment. Recruited to the promoter of the transcriptional activator MYOG at the early stages of muscle differentiation where it mediates binding of histone variant H2AZ1 to chromatin and induces muscle-specific gene expression. Maintains hematopoietic stem cell (HSC) quiescence by determining the chromatin accessibility at distal enhancers of HSC quiescence genes such as PTEN, FSTL1 and KLF4, enhancing deposition of H2AZ1 to promote their sustained transcription and restricting PI3K-AKT signaling inhibition. Plays a role in intestinal stem cell maintenance by promoting H2AZ1 deposition at the transcription start sites of genes involved in intestinal stem cell fate determination including LGR5, TGFB1 and TGFBR2, thereby contributing to gene transcription. Promotes phosphorylation of the H2AZ1 chaperone VPS72/YL1 which enhances the interaction between HZAZ1 and VPS72. Regulates the entry of male germ cells into meiosis by controlling histone H2AZ1 deposition which facilitates the expression of meiotic genes such as MEIOSIN, leading to the initiation of meiosis. Required for postnatal heart function through its role in maintenance of cardiac Ca(2+) homeostasis by modulating the expression of Ca(2+)-regulating proteins CASQ1 and ATP2A2/SERCA2A via deposition of histone H2AZ1 at their promoters. During embryonic heart development, required for mitochondrial maturation and oxidative metabolism by functioning through H2AZ1 deposition to activate transcription of metabolic genes and is also required to maintain the stability of the respiratory complex. In neural cells, increases deposition of the H2AZ1 histone variant and promotes neurite growth. Plays a role in TP53/p53-mediated apoptosis induction by stimulating the transcriptional activation of several proapoptotic p53 target genes such as PMAIP1/NOXA and BBC3/PUMA. Mediates cell cycle arrest induced in response to gamma-irradiation by enhancing recruitment of TP53/p53 to the promoter of the cell cycle inhibitor CDKN1A, leading to its transcriptional activation. Recruited to the promoter of cyclin-dependent kinase CDK6 and inhibits its transcription, possibly by decreasing the acetylation level of histone H4, leading to cell cycle arrest at the G1 phase. Plays a role in lens fiber cell differentiation by regulating the expression of cell cycle regulator CDKN1A/p21Cip1. Binds to transcriptional repressor NR1D2 and relieves it of its inhibitory effect on the transcription of apolipoprotein APOC3 without affecting its DNA-binding activity. The sequence is that of Zinc finger HIT domain-containing protein 1 (Znhit1) from Mus musculus (Mouse).